The primary structure comprises 232 residues: MSVVKSIRAQIPPIHREGYPFIGAFALATLVLFLIWAPLGWIGTVLTIWCALFFRDPVRVTPVREGLVVAPADGRVSMVVQMIPPPALGLGDKPLPRVSIFMSVFNCHVNRSPVAGRVERIIYSPGKFINAELDKASEDNERNSMVISTPAGQIGVVQIAGLVARRIVSFVREGQTLAPGERFGLIRFGSRLDVYLPEGAKPLVSEGQTAIAGETVLADFNLGDGGRTYRAD.

Residue Ser190 is the Schiff-base intermediate with substrate; via pyruvic acid of the active site. Position 190 is a pyruvic acid (Ser); by autocatalysis (Ser190).

The protein belongs to the phosphatidylserine decarboxylase family. PSD-A subfamily. As to quaternary structure, heterodimer of a large membrane-associated beta subunit and a small pyruvoyl-containing alpha subunit. Pyruvate serves as cofactor. Post-translationally, is synthesized initially as an inactive proenzyme. Formation of the active enzyme involves a self-maturation process in which the active site pyruvoyl group is generated from an internal serine residue via an autocatalytic post-translational modification. Two non-identical subunits are generated from the proenzyme in this reaction, and the pyruvate is formed at the N-terminus of the alpha chain, which is derived from the carboxyl end of the proenzyme. The post-translation cleavage follows an unusual pathway, termed non-hydrolytic serinolysis, in which the side chain hydroxyl group of the serine supplies its oxygen atom to form the C-terminus of the beta chain, while the remainder of the serine residue undergoes an oxidative deamination to produce ammonia and the pyruvoyl prosthetic group on the alpha chain.

Its subcellular location is the cell membrane. It carries out the reaction a 1,2-diacyl-sn-glycero-3-phospho-L-serine + H(+) = a 1,2-diacyl-sn-glycero-3-phosphoethanolamine + CO2. It functions in the pathway phospholipid metabolism; phosphatidylethanolamine biosynthesis; phosphatidylethanolamine from CDP-diacylglycerol: step 2/2. Its function is as follows. Catalyzes the formation of phosphatidylethanolamine (PtdEtn) from phosphatidylserine (PtdSer). This Rhodopseudomonas palustris (strain BisB5) protein is Phosphatidylserine decarboxylase proenzyme.